Here is a 417-residue protein sequence, read N- to C-terminus: Multifunctional CCA protein (417 aa).

The ATP site is built by G8 and R11. Positions 8 and 11 each coordinate CTP. Mg(2+) is bound by residues D21 and D23. R91, R137, and R140 together coordinate ATP. CTP is bound by residues R91, R137, and R140. In terms of domain architecture, HD spans 225 to 326; it reads SGIHTLMTLQ…LNVLKKTDAF (102 aa).

It belongs to the tRNA nucleotidyltransferase/poly(A) polymerase family. Bacterial CCA-adding enzyme type 1 subfamily. In terms of assembly, monomer. Can also form homodimers and oligomers. Mg(2+) serves as cofactor. Ni(2+) is required as a cofactor.

The enzyme catalyses a tRNA precursor + 2 CTP + ATP = a tRNA with a 3' CCA end + 3 diphosphate. The catalysed reaction is a tRNA with a 3' CCA end + 2 CTP + ATP = a tRNA with a 3' CCACCA end + 3 diphosphate. Its function is as follows. Catalyzes the addition and repair of the essential 3'-terminal CCA sequence in tRNAs without using a nucleic acid template. Adds these three nucleotides in the order of C, C, and A to the tRNA nucleotide-73, using CTP and ATP as substrates and producing inorganic pyrophosphate. tRNA 3'-terminal CCA addition is required both for tRNA processing and repair. Also involved in tRNA surveillance by mediating tandem CCA addition to generate a CCACCA at the 3' terminus of unstable tRNAs. While stable tRNAs receive only 3'-terminal CCA, unstable tRNAs are marked with CCACCA and rapidly degraded. The protein is Multifunctional CCA protein of Neisseria meningitidis serogroup C / serotype 2a (strain ATCC 700532 / DSM 15464 / FAM18).